The sequence spans 475 residues: Early growth response protein 1-B (475 aa).

Disordered stretches follow at residues N109–I180 and P264–A285. Positions S111–S140 are enriched in low complexity. Positions Q170–S179 are enriched in polar residues. 3 consecutive C2H2-type zinc fingers follow at residues Y284–H308, F314–H336, and F342–H364. The disordered stretch occupies residues D355 to S379. A compositionally biased stretch (basic residues) spans R359–D369.

It belongs to the EGR C2H2-type zinc-finger protein family.

Its subcellular location is the nucleus. The protein resides in the cytoplasm. In terms of biological role, transcriptional regulator. Recognizes and binds to the DNA sequence 5'-GCG(T/G)GGGCG-3'(EGR-site) in the promoter region of target genes. Binds double-stranded target DNA, irrespective of the cytosine methylation status. Regulates the transcription of numerous target genes, and thereby plays an important role in regulating the response to growth factors, DNA damage, and ischemia. Plays a role in the regulation of cell survival, proliferation and cell death. Mediates responses to ischemia and hypoxia; regulates the expression of proteins that are involved in inflammatory processes. Plays a role in regulating the expression of circadian clock genes. In Xenopus laevis (African clawed frog), this protein is Early growth response protein 1-B (egr1-b).